The sequence spans 97 residues: YcgL domain-containing protein APP7_0754 (97 aa).

The YcgL domain occupies 6 to 90 (NLCAIYKSPK…PPENLLKTFL (85 aa)).

The chain is YcgL domain-containing protein APP7_0754 from Actinobacillus pleuropneumoniae serotype 7 (strain AP76).